The following is a 333-amino-acid chain: Phosphate acyltransferase (333 aa).

It belongs to the PlsX family. As to quaternary structure, homodimer. Probably interacts with PlsY.

It localises to the cytoplasm. It catalyses the reaction a fatty acyl-[ACP] + phosphate = an acyl phosphate + holo-[ACP]. Its pathway is lipid metabolism; phospholipid metabolism. Its function is as follows. Catalyzes the reversible formation of acyl-phosphate (acyl-PO(4)) from acyl-[acyl-carrier-protein] (acyl-ACP). This enzyme utilizes acyl-ACP as fatty acyl donor, but not acyl-CoA. The polypeptide is Phosphate acyltransferase (Lactobacillus johnsonii (strain CNCM I-12250 / La1 / NCC 533)).